Here is a 362-residue protein sequence, read N- to C-terminus: Microfibril-associated glycoprotein 3 (362 aa).

A signal peptide spans 1-18 (MKLHCCLFTLVASIIVPA). The Extracellular portion of the chain corresponds to 19–147 (AFVLEDVDFD…LRVIFTSGDM (129 aa)). 3 N-linked (GlcNAc...) asparagine glycosylation sites follow: Asn-36, Asn-41, and Asn-110. Residues 45–137 (PSSFELSASS…SPIRASYSVT (93 aa)) enclose the Ig-like C2-type domain. Cys-73 and Cys-124 are disulfide-bonded. The helical transmembrane segment at 148-170 (SVYYMIVCLIAFTITLILNVTRL) threads the bilayer. Residues 171 to 362 (CMMSSHLRKT…KDGAYENCQL (192 aa)) are Cytoplasmic-facing. Disordered stretches follow at residues 285–306 (VINP…GSLN) and 323–350 (ETKS…ESNC). The span at 323-337 (ETKSIDTESQGSSHF) shows a compositional bias: polar residues.

Glycosylated.

It is found in the cell membrane. In terms of biological role, component of the elastin-associated microfibrils. The sequence is that of Microfibril-associated glycoprotein 3 (MFAP3) from Homo sapiens (Human).